Here is a 150-residue protein sequence, read N- to C-terminus: MSLTLQSLKPQKGARRRKMRKGRGIAAGQGASCGFGMRGQKSRSGRPTRPGFEGGQMPLYRRVPKLKHFTLVNPKRFTVVNVGELAELKAGTVVTRDSLTEAGILTSPKHALKVLGDGELKVKLTVHAAAFTASAREKIEAAGGSCELID.

The interval 1–57 (MSLTLQSLKPQKGARRRKMRKGRGIAAGQGASCGFGMRGQKSRSGRPTRPGFEGGQM) is disordered. Positions 12 to 23 (KGARRRKMRKGR) are enriched in basic residues. Residues 25–37 (IAAGQGASCGFGM) show a composition bias toward gly residues.

The protein belongs to the universal ribosomal protein uL15 family. Part of the 50S ribosomal subunit.

Functionally, binds to the 23S rRNA. The polypeptide is Large ribosomal subunit protein uL15 (Synechococcus sp. (strain RCC307)).